A 142-amino-acid chain; its full sequence is MQIKIKYLDETQTRINKMEQGDWIDLRAAEDVAIKKDEFKLVPLGVAMELPEGYEAHVVPRSSTYKNFGVIQTNSMGVIDESYKGDNDFWFFPAYALRDTKIKKGDRICQFRIMKKMPAVDLIEVDRLGNGDRGGHGSTGTK.

The dUMP site is built by S62 and N74. Residue D80 is the Proton acceptor of the active site. Residues Y83 and F91 each contribute to the dUMP site.

Belongs to the dUTPase family. Homotrimer. Requires Mg(2+) as cofactor.

It catalyses the reaction dUTP + H2O = dUMP + diphosphate + H(+). It functions in the pathway pyrimidine metabolism; dUMP biosynthesis; dUMP from dCTP (dUTP route): step 2/2. Involved in nucleotide metabolism: produces dUMP, the immediate precursor of thymidine nucleotides and decreases the intracellular concentration of dUTP, so that uracil cannot be incorporated into DNA. The Ser-62 side chain changes its position upon ligand-binding to make contacts with the nucleotide phosphates. The polypeptide is SPbeta prophage-derived deoxyuridine 5'-triphosphate nucleotidohydrolase YosS (Bacillus subtilis (strain 168)).